The primary structure comprises 179 residues: Large ribosomal subunit protein uL5 (179 aa).

The protein belongs to the universal ribosomal protein uL5 family. As to quaternary structure, part of the 50S ribosomal subunit; part of the 5S rRNA/L5/L18/L25 subcomplex. Contacts the 5S rRNA and the P site tRNA. Forms a bridge to the 30S subunit in the 70S ribosome.

In terms of biological role, this is one of the proteins that bind and probably mediate the attachment of the 5S RNA into the large ribosomal subunit, where it forms part of the central protuberance. In the 70S ribosome it contacts protein S13 of the 30S subunit (bridge B1b), connecting the 2 subunits; this bridge is implicated in subunit movement. Contacts the P site tRNA; the 5S rRNA and some of its associated proteins might help stabilize positioning of ribosome-bound tRNAs. The chain is Large ribosomal subunit protein uL5 from Parasynechococcus marenigrum (strain WH8102).